The following is a 380-amino-acid chain: Shaggy-related protein kinase eta (380 aa).

A Protein kinase domain is found at 40–324; sequence YMAERVVGTG…ALEACAHPFF (285 aa). ATP contacts are provided by residues 46 to 54 and K69; that span reads VGTGSFGIV. T104 bears the Phosphothreonine mark. Residue S105 is modified to Phosphoserine. D165 serves as the catalytic Proton acceptor. Position 187 is a phosphoserine (S187). Y200 carries the phosphotyrosine modification. 2 positions are modified to phosphothreonine: T220 and T261. At S310 the chain carries Phosphoserine. T314 bears the Phosphothreonine mark. S353 is subject to Phosphoserine.

The protein belongs to the protein kinase superfamily. CMGC Ser/Thr protein kinase family. GSK-3 subfamily. As to quaternary structure, interacts in vitro with the C-terminal fragment of BZR1 and with BES1/BZR2, but not through the kinase domain. Interacts with BHLH150, beet curly top virus AL4/C4 and tomato golden mosaic virus AL4/AC4. Interacts with YDA. Interacts with MKK4. Interacts with KIB1 and KIB2 in a brassinosteroid (BR)-dependent manner. Interacts with BSK1, BSK6, BSK8 and BSK11. Binds to WRKY46, WRKY54 and WRKY70. Component of a complex made of POLAR, BASL, ASK7/BIN2 and ASK3/SK12. Binds to POLAR and BASL. In terms of processing, autophosphorylated mainly on threonine and serine residues. Post-translationally, ubiquitination and subsequent proteasomal degradation mediated by KIB1. In the two outer cell layers of the developing seed coat and restricted to the suspensor cells in developing embryos. Mostly expressed in stomatal lineage cells with asymmetric cell division (ACD) potential. Observed in small cells of non-protruding hypocotyl cell files and of developing cotyledon epidermis.

It localises to the cytoplasm. The protein localises to the cell cortex. Its subcellular location is the nucleus. It is found in the cell membrane. It catalyses the reaction L-seryl-[protein] + ATP = O-phospho-L-seryl-[protein] + ADP + H(+). The catalysed reaction is L-threonyl-[protein] + ATP = O-phospho-L-threonyl-[protein] + ADP + H(+). With respect to regulation, inactivated by an unknown mechanism after binding of brassinosteroids to the brassinosteroid receptor complex. Inhibited by lithium. Inhibited by dephosphorylation at Tyr-200 by BSU1. Competitive inhibition by KIB1 that reduces substrate (e.g. BZR1) access. Repressed by bikinin. In terms of biological role, negative regulator in brassinosteroid signal transduction pathway important for plant growth. May be also involved in auxin signaling pathway. Phosphorylates and increases the degradation of BZR1 and BZR2/BES1 by the proteasome. Phosphorylates BHLH150, beet curly top virus C4 and tomato golden mosaic virus AC4 on threonine and serine residues. Upon brassinosteroid signaling, inhibits stomatal development by phosphorylating and inhibiting the MAPKK kinase YDA and the MAPK kinases MKK4 and MKK5. Phosphorylates BSK1, BSK3, BSK5, BSK6, BSK8 and BSK11 in vitro. Phoyphorylates and destabilizes WRKY46, WRKY54 and WRKY70. Mediates BASL nuclear exclusion; kinase activity is required for this function. Required first at the cortical polarity site, to restrict MAPK signaling and promote asymmetric cell division (ACD), and second in the nucleus of stomatal lineage ground cells (SLGCs) or meristemoids, to limit cell division and to promote differentiation into pavement or stomatal guard cells, respectively, likely by initiating BASL polarization. Phosphorylates BASL, YDA and SPCH in vitro and POLAR in vivo. Phosphorylates and inhibits SPCH in the nucleus of SLGC undergoing ACD, thus negatively regulating stomatal development. The protein is Shaggy-related protein kinase eta of Arabidopsis thaliana (Mouse-ear cress).